The following is a 573-amino-acid chain: SHC-transforming protein 2 (573 aa).

The PID domain maps to 125–307; sequence LGPGVSYIVR…TGLEESAWGD (183 aa). Residues 478–569 enclose the SH2 domain; sequence WYHGRMSRRA…ESELHLRGVV (92 aa).

As to quaternary structure, interacts with the Trk receptors in a phosphotyrosine-dependent manner and MEGF12. Once activated, binds to GRB2. Post-translationally, phosphorylated on tyrosine by the Trk receptors.

Functionally, signaling adapter that couples activated growth factor receptors to signaling pathway in neurons. Involved in the signal transduction pathways of neurotrophin-activated Trk receptors in cortical neurons. This is SHC-transforming protein 2 (Shc2) from Rattus norvegicus (Rat).